Here is a 72-residue protein sequence, read N- to C-terminus: Translation initiation factor IF-1 (72 aa).

Residues 1 to 72 (MAKEEVLEFP…TKGRITYRLK (72 aa)) form the S1-like domain.

This sequence belongs to the IF-1 family. Component of the 30S ribosomal translation pre-initiation complex which assembles on the 30S ribosome in the order IF-2 and IF-3, IF-1 and N-formylmethionyl-tRNA(fMet); mRNA recruitment can occur at any time during PIC assembly.

The protein resides in the cytoplasm. In terms of biological role, one of the essential components for the initiation of protein synthesis. Stabilizes the binding of IF-2 and IF-3 on the 30S subunit to which N-formylmethionyl-tRNA(fMet) subsequently binds. Helps modulate mRNA selection, yielding the 30S pre-initiation complex (PIC). Upon addition of the 50S ribosomal subunit IF-1, IF-2 and IF-3 are released leaving the mature 70S translation initiation complex. The polypeptide is Translation initiation factor IF-1 (Brucella suis biovar 1 (strain 1330)).